Reading from the N-terminus, the 193-residue chain is Putative protein-glutamate methylesterase/protein-glutamine glutaminase (193 aa).

Residues 1-179 (MNYEAIVIGV…DYVLSLEKIA (179 aa)) enclose the CheB-type methylesterase domain. Residues serine 11, histidine 38, and aspartate 131 contribute to the active site.

This sequence belongs to the CheB family.

The protein localises to the cytoplasm. It carries out the reaction [protein]-L-glutamate 5-O-methyl ester + H2O = L-glutamyl-[protein] + methanol + H(+). It catalyses the reaction L-glutaminyl-[protein] + H2O = L-glutamyl-[protein] + NH4(+). In terms of biological role, may be involved in chemotaxis. This Leptospira interrogans serogroup Icterohaemorrhagiae serovar copenhageni (strain Fiocruz L1-130) protein is Putative protein-glutamate methylesterase/protein-glutamine glutaminase (cheB2).